Here is a 263-residue protein sequence, read N- to C-terminus: Auxin-responsive protein IAA3 (263 aa).

2 disordered regions span residues 1–54 (MSPP…RRPA) and 76–121 (RVFP…PAAK). Residues 28–38 (RADDVDLKGTE) are compositionally biased toward basic and acidic residues. Positions 39–43 (LRLGL) match the EAR-like (transcriptional repression) motif. The PB1 domain occupies 158 to 245 (FLYVKVSMDG…SCRRLRIMKG (88 aa)).

It belongs to the Aux/IAA family. Homodimers and heterodimers. As to expression, highly expressed in flowers. Expressed in roots and shoots.

It is found in the nucleus. In terms of biological role, aux/IAA proteins are short-lived transcriptional factors that function as repressors of early auxin response genes at low auxin concentrations. The chain is Auxin-responsive protein IAA3 (IAA3) from Oryza sativa subsp. japonica (Rice).